We begin with the raw amino-acid sequence, 747 residues long: DNA ligase 1 (747 aa).

A disordered region spans residues 1–84; the sequence is MQKSITSFFK…KEVDDKTTDK (84 aa). Residues S18, S20, S42, S44, S46, S60, and S65 each carry the phosphoserine modification. The span at 26–42 shows a compositional bias: basic and acidic residues; that stretch reads PKIDAKTELPDEPHIKS. Residues 60-84 are compositionally biased toward basic and acidic residues; sequence SEEKTSPVKNVKKEPKEVDDKTTDK. K395 (N6-AMP-lysine intermediate) is an active-site residue. The span at 725-740 shows a compositional bias: polar residues; it reads QSQDQVKNNQKSSTQM. The interval 725-747 is disordered; it reads QSQDQVKNNQKSSTQMEMEDEFY.

This sequence belongs to the ATP-dependent DNA ligase family.

The protein resides in the nucleus. It catalyses the reaction ATP + (deoxyribonucleotide)n-3'-hydroxyl + 5'-phospho-(deoxyribonucleotide)m = (deoxyribonucleotide)n+m + AMP + diphosphate.. In terms of biological role, DNA ligase that seals nicks in double-stranded DNA during DNA replication, DNA recombination and DNA repair. The protein is DNA ligase 1 of Drosophila melanogaster (Fruit fly).